We begin with the raw amino-acid sequence, 121 residues long: Small ribosomal subunit protein uS13 (121 aa).

A disordered region spans residues 97-121 (VRGQRTRTNARTRRGARKTVAGKKK). The span at 100–121 (QRTRTNARTRRGARKTVAGKKK) shows a compositional bias: basic residues.

The protein belongs to the universal ribosomal protein uS13 family. Part of the 30S ribosomal subunit. Forms a loose heterodimer with protein S19. Forms two bridges to the 50S subunit in the 70S ribosome.

In terms of biological role, located at the top of the head of the 30S subunit, it contacts several helices of the 16S rRNA. In the 70S ribosome it contacts the 23S rRNA (bridge B1a) and protein L5 of the 50S subunit (bridge B1b), connecting the 2 subunits; these bridges are implicated in subunit movement. Contacts the tRNAs in the A and P-sites. This is Small ribosomal subunit protein uS13 from Parasynechococcus marenigrum (strain WH8102).